The primary structure comprises 445 residues: Tubulin beta-4B chain (445 aa).

The MREI motif signature appears at 1 to 4 (MREI). Glutamine 11 contributes to the GTP binding site. Residue threonine 55 is modified to Phosphothreonine. Lysine 58 bears the N6-acetyllysine mark. GTP contacts are provided by glutamate 69, serine 138, glycine 142, threonine 143, and glycine 144. Residue glutamate 69 coordinates Mg(2+). At serine 172 the chain carries Phosphoserine; by CDK1. Positions 204 and 226 each coordinate GTP. Residues 426–445 (QDATAEEEGEFEEEAEEEVA) are disordered. Positions 429–445 (TAEEEGEFEEEAEEEVA) are enriched in acidic residues. Residue glutamate 438 is modified to 5-glutamyl polyglutamate.

It belongs to the tubulin family. Dimer of alpha and beta chains. A typical microtubule is a hollow water-filled tube with an outer diameter of 25 nm and an inner diameter of 15 nM. Alpha-beta heterodimers associate head-to-tail to form protofilaments running lengthwise along the microtubule wall with the beta-tubulin subunit facing the microtubule plus end conferring a structural polarity. Microtubules usually have 13 protofilaments but different protofilament numbers can be found in some organisms and specialized cells. Component of sperm flagellar doublet microtubules. It depends on Mg(2+) as a cofactor. Some glutamate residues at the C-terminus are polyglycylated, resulting in polyglycine chains on the gamma-carboxyl group. Glycylation is mainly limited to tubulin incorporated into axonemes (cilia and flagella) whereas glutamylation is prevalent in neuronal cells, centrioles, axonemes, and the mitotic spindle. Both modifications can coexist on the same protein on adjacent residues, and lowering polyglycylation levels increases polyglutamylation, and reciprocally. Cilia and flagella glycylation is required for their stability and maintenance. Flagella glycylation controls sperm motility. In terms of processing, some glutamate residues at the C-terminus are polyglutamylated, resulting in polyglutamate chains on the gamma-carboxyl group. Polyglutamylation plays a key role in microtubule severing by spastin (SPAST). SPAST preferentially recognizes and acts on microtubules decorated with short polyglutamate tails: severing activity by SPAST increases as the number of glutamates per tubulin rises from one to eight, but decreases beyond this glutamylation threshold. Glutamylation is also involved in cilia motility. Post-translationally, phosphorylated on Ser-172 by CDK1 during the cell cycle, from metaphase to telophase, but not in interphase. This phosphorylation inhibits tubulin incorporation into microtubules.

Its subcellular location is the cytoplasm. The protein localises to the cytoskeleton. It is found in the flagellum axoneme. Functionally, tubulin is the major constituent of microtubules, a cylinder consisting of laterally associated linear protofilaments composed of alpha- and beta-tubulin heterodimers. Microtubules grow by the addition of GTP-tubulin dimers to the microtubule end, where a stabilizing cap forms. Below the cap, tubulin dimers are in GDP-bound state, owing to GTPase activity of alpha-tubulin. This chain is Tubulin beta-4B chain (TUBB4B), found in Bos taurus (Bovine).